A 190-amino-acid polypeptide reads, in one-letter code: Threonylcarbamoyl-AMP synthase (190 aa).

In terms of domain architecture, YrdC-like spans R7–G190.

This sequence belongs to the SUA5 family. TsaC subfamily.

Its subcellular location is the cytoplasm. It carries out the reaction L-threonine + hydrogencarbonate + ATP = L-threonylcarbamoyladenylate + diphosphate + H2O. Required for the formation of a threonylcarbamoyl group on adenosine at position 37 (t(6)A37) in tRNAs that read codons beginning with adenine. Catalyzes the conversion of L-threonine, HCO(3)(-)/CO(2) and ATP to give threonylcarbamoyl-AMP (TC-AMP) as the acyladenylate intermediate, with the release of diphosphate. The sequence is that of Threonylcarbamoyl-AMP synthase from Yersinia enterocolitica serotype O:8 / biotype 1B (strain NCTC 13174 / 8081).